Reading from the N-terminus, the 118-residue chain is Non-specific lipid-transfer protein 3 (118 aa).

The first 25 residues, 1–25 (MARSMNLACVALVMCMVVIAPMAEA), serve as a signal peptide directing secretion. 4 disulfides stabilise this stretch: C29/C76, C39/C53, C54/C99, and C74/C113.

This sequence belongs to the plant LTP family.

Plant non-specific lipid-transfer proteins transfer phospholipids as well as galactolipids across membranes. May play a role in wax or cutin deposition in the cell walls of expanding epidermal cells and certain secretory tissues. The protein is Non-specific lipid-transfer protein 3 of Lens culinaris (Lentil).